Reading from the N-terminus, the 340-residue chain is Outer membrane protein B (340 aa).

An N-terminal signal peptide occupies residues 1-26 (MSSKLVNYLRLTFLSFLGIASTSLDA).

This sequence belongs to the chlamydial OMP family.

It localises to the cell outer membrane. The chain is Outer membrane protein B (ompB) from Chlamydia trachomatis serovar D (strain ATCC VR-885 / DSM 19411 / UW-3/Cx).